Consider the following 163-residue polypeptide: 6,7-dimethyl-8-ribityllumazine synthase (163 aa).

5-amino-6-(D-ribitylamino)uracil contacts are provided by residues phenylalanine 27, 58-60 (ALE), and 87-89 (CVI). 92-93 (DT) lines the (2S)-2-hydroxy-3-oxobutyl phosphate pocket. Histidine 95 serves as the catalytic Proton donor. Asparagine 120 is a 5-amino-6-(D-ribitylamino)uracil binding site. Arginine 134 serves as a coordination point for (2S)-2-hydroxy-3-oxobutyl phosphate.

It belongs to the DMRL synthase family.

It catalyses the reaction (2S)-2-hydroxy-3-oxobutyl phosphate + 5-amino-6-(D-ribitylamino)uracil = 6,7-dimethyl-8-(1-D-ribityl)lumazine + phosphate + 2 H2O + H(+). Its pathway is cofactor biosynthesis; riboflavin biosynthesis; riboflavin from 2-hydroxy-3-oxobutyl phosphate and 5-amino-6-(D-ribitylamino)uracil: step 1/2. Catalyzes the formation of 6,7-dimethyl-8-ribityllumazine by condensation of 5-amino-6-(D-ribitylamino)uracil with 3,4-dihydroxy-2-butanone 4-phosphate. This is the penultimate step in the biosynthesis of riboflavin. This Afipia carboxidovorans (strain ATCC 49405 / DSM 1227 / KCTC 32145 / OM5) (Oligotropha carboxidovorans) protein is 6,7-dimethyl-8-ribityllumazine synthase.